Reading from the N-terminus, the 188-residue chain is Peptidyl-tRNA hydrolase (188 aa).

A tRNA-binding site is contributed by phenylalanine 15. The Proton acceptor role is filled by histidine 20. The tRNA site is built by tyrosine 64, asparagine 66, and asparagine 112.

This sequence belongs to the PTH family. In terms of assembly, monomer.

It localises to the cytoplasm. The enzyme catalyses an N-acyl-L-alpha-aminoacyl-tRNA + H2O = an N-acyl-L-amino acid + a tRNA + H(+). Hydrolyzes ribosome-free peptidyl-tRNAs (with 1 or more amino acids incorporated), which drop off the ribosome during protein synthesis, or as a result of ribosome stalling. Functionally, catalyzes the release of premature peptidyl moieties from peptidyl-tRNA molecules trapped in stalled 50S ribosomal subunits, and thus maintains levels of free tRNAs and 50S ribosomes. The polypeptide is Peptidyl-tRNA hydrolase (Borrelia recurrentis (strain A1)).